A 128-amino-acid polypeptide reads, in one-letter code: UPF0102 protein PSPTO_4420 (128 aa).

Belongs to the UPF0102 family.

The chain is UPF0102 protein PSPTO_4420 from Pseudomonas syringae pv. tomato (strain ATCC BAA-871 / DC3000).